Consider the following 556-residue polypeptide: 2-succinyl-5-enolpyruvyl-6-hydroxy-3-cyclohexene-1-carboxylate synthase (556 aa).

The protein belongs to the TPP enzyme family. MenD subfamily. In terms of assembly, homodimer. Mg(2+) is required as a cofactor. The cofactor is Mn(2+). Thiamine diphosphate serves as cofactor.

The enzyme catalyses isochorismate + 2-oxoglutarate + H(+) = 5-enolpyruvoyl-6-hydroxy-2-succinyl-cyclohex-3-ene-1-carboxylate + CO2. It participates in quinol/quinone metabolism; 1,4-dihydroxy-2-naphthoate biosynthesis; 1,4-dihydroxy-2-naphthoate from chorismate: step 2/7. The protein operates within quinol/quinone metabolism; menaquinone biosynthesis. Functionally, catalyzes the thiamine diphosphate-dependent decarboxylation of 2-oxoglutarate and the subsequent addition of the resulting succinic semialdehyde-thiamine pyrophosphate anion to isochorismate to yield 2-succinyl-5-enolpyruvyl-6-hydroxy-3-cyclohexene-1-carboxylate (SEPHCHC). The protein is 2-succinyl-5-enolpyruvyl-6-hydroxy-3-cyclohexene-1-carboxylate synthase of Escherichia coli (strain ATCC 8739 / DSM 1576 / NBRC 3972 / NCIMB 8545 / WDCM 00012 / Crooks).